The following is a 423-amino-acid chain: UDP-N-acetylglucosamine 1-carboxyvinyltransferase 2 (423 aa).

23 to 24 (KN) contributes to the phosphoenolpyruvate binding site. Arg-93 is a UDP-N-acetyl-alpha-D-glucosamine binding site. The Proton donor role is filled by Cys-117. Cys-117 bears the 2-(S-cysteinyl)pyruvic acid O-phosphothioketal mark. UDP-N-acetyl-alpha-D-glucosamine contacts are provided by residues 122–126 (RPIDQ), Asp-305, and Ile-327.

The protein belongs to the EPSP synthase family. MurA subfamily.

It localises to the cytoplasm. It catalyses the reaction phosphoenolpyruvate + UDP-N-acetyl-alpha-D-glucosamine = UDP-N-acetyl-3-O-(1-carboxyvinyl)-alpha-D-glucosamine + phosphate. The protein operates within cell wall biogenesis; peptidoglycan biosynthesis. Its function is as follows. Cell wall formation. Adds enolpyruvyl to UDP-N-acetylglucosamine. The sequence is that of UDP-N-acetylglucosamine 1-carboxyvinyltransferase 2 from Listeria innocua serovar 6a (strain ATCC BAA-680 / CLIP 11262).